A 643-amino-acid chain; its full sequence is Ecto-NOX disulfide-thiol exchanger 1 (643 aa).

The RRM domain occupies 142–221; the sequence is KTVFVGGLPE…GRLHVDFAQA (80 aa). Coiled-coil stretches lie at residues 307 to 342 and 425 to 521; these read VQSANSHVRRLMNEKATHEQEMEEAKENFKNALTGI and QAYA…QLKG.

This sequence belongs to the ENOX family. It depends on Cu cation as a cofactor.

The protein resides in the cell membrane. The protein localises to the secreted. It localises to the extracellular space. With respect to regulation, not inhibited by the antitumor sulfonylurea LY181984, the vabilloid capsaicin, and retinoids. Functionally, probably acts as a terminal oxidase of plasma electron transport from cytosolic NAD(P)H via hydroquinones to acceptors at the cell surface. Hydroquinone oxidase activity alternates with a protein disulfide-thiol interchange/oxidoreductase activity which may control physical membrane displacements associated with vesicle budding or cell enlargement. The activities oscillate with a period length of 24 minutes and play a role in control of the ultradian cellular biological clock. The protein is Ecto-NOX disulfide-thiol exchanger 1 (Enox1) of Mus musculus (Mouse).